The chain runs to 428 residues: Light-independent protochlorophyllide reductase subunit N (428 aa).

Residues cysteine 16, cysteine 41, and cysteine 102 each contribute to the [4Fe-4S] cluster site.

The protein belongs to the BchN/ChlN family. As to quaternary structure, protochlorophyllide reductase is composed of three subunits; ChlL, ChlN and ChlB. Forms a heterotetramer of two ChlB and two ChlN subunits. The cofactor is [4Fe-4S] cluster.

It carries out the reaction chlorophyllide a + oxidized 2[4Fe-4S]-[ferredoxin] + 2 ADP + 2 phosphate = protochlorophyllide a + reduced 2[4Fe-4S]-[ferredoxin] + 2 ATP + 2 H2O. The protein operates within porphyrin-containing compound metabolism; chlorophyll biosynthesis (light-independent). Component of the dark-operative protochlorophyllide reductase (DPOR) that uses Mg-ATP and reduced ferredoxin to reduce ring D of protochlorophyllide (Pchlide) to form chlorophyllide a (Chlide). This reaction is light-independent. The NB-protein (ChlN-ChlB) is the catalytic component of the complex. The chain is Light-independent protochlorophyllide reductase subunit N from Synechococcus sp. (strain CC9311).